Reading from the N-terminus, the 83-residue chain is Cytochrome c oxidase subunit 7A2, mitochondrial (83 aa).

Residues 1–23 (MLRNVLALRQIAQRTISTTSRRH) constitute a mitochondrion transit peptide. Topologically, residues 24–48 (FENKVPEKQKLFQEDNGMPVHLKGG) are mitochondrial matrix. The residue at position 33 (K33) is an N6-acetyllysine. Residues 49 to 77 (TSDALLYRATMLLTVGGTAYAIYMLAMAA) traverse the membrane as a helical segment. The Mitochondrial intermembrane segment spans residues 78 to 83 (FPKKQN).

It belongs to the cytochrome c oxidase VIIa family. In terms of assembly, component of the cytochrome c oxidase (complex IV, CIV), a multisubunit enzyme composed of 14 subunits. The complex is composed of a catalytic core of 3 subunits MT-CO1, MT-CO2 and MT-CO3, encoded in the mitochondrial DNA, and 11 supernumerary subunits COX4I, COX5A, COX5B, COX6A, COX6B, COX6C, COX7A, COX7B, COX7C, COX8 and NDUFA4, which are encoded in the nuclear genome. The complex exists as a monomer or a dimer and forms supercomplexes (SCs) in the inner mitochondrial membrane with NADH-ubiquinone oxidoreductase (complex I, CI) and ubiquinol-cytochrome c oxidoreductase (cytochrome b-c1 complex, complex III, CIII), resulting in different assemblies (supercomplex SCI(1)III(2)IV(1) and megacomplex MCI(2)III(2)IV(2)). Interacts with PET100.

It is found in the mitochondrion inner membrane. It participates in energy metabolism; oxidative phosphorylation. Functionally, component of the cytochrome c oxidase, the last enzyme in the mitochondrial electron transport chain which drives oxidative phosphorylation. The respiratory chain contains 3 multisubunit complexes succinate dehydrogenase (complex II, CII), ubiquinol-cytochrome c oxidoreductase (cytochrome b-c1 complex, complex III, CIII) and cytochrome c oxidase (complex IV, CIV), that cooperate to transfer electrons derived from NADH and succinate to molecular oxygen, creating an electrochemical gradient over the inner membrane that drives transmembrane transport and the ATP synthase. Cytochrome c oxidase is the component of the respiratory chain that catalyzes the reduction of oxygen to water. Electrons originating from reduced cytochrome c in the intermembrane space (IMS) are transferred via the dinuclear copper A center (CU(A)) of subunit 2 and heme A of subunit 1 to the active site in subunit 1, a binuclear center (BNC) formed by heme A3 and copper B (CU(B)). The BNC reduces molecular oxygen to 2 water molecules using 4 electrons from cytochrome c in the IMS and 4 protons from the mitochondrial matrix. The chain is Cytochrome c oxidase subunit 7A2, mitochondrial (Cox7a2) from Rattus norvegicus (Rat).